The chain runs to 185 residues: MAKQDPTSSNTMLPLVGSEFVRPQPLDLTITGDTVKDATGNKVFKVKTPLFGLHNKRILVDPNDSPIVTMKMKVTSKHDRWQVYRGSDLDDKIFTVKRSSTVQLKTRVEVFLKHNQTRESSCDFTIKGRFMKRACTIYVADSTKIIAQVYEGHERLVATIYPNVDYAFIVTLIFIFDLINMGTGI.

This sequence belongs to the LOR family.

In terms of biological role, might be related to the phospholipid scramblase and tubby-like superfamily of membrane tethered transcription factors. In Arabidopsis thaliana (Mouse-ear cress), this protein is Protein LURP-one-related 13.